Reading from the N-terminus, the 381-residue chain is MYG1 exonuclease (381 aa).

A mitochondrion-targeting transit peptide spans Met-1 to Ile-47. Residues Lys-267 and Lys-273 each carry the N6-acetyllysine modification.

The protein belongs to the MYG1 family.

The protein localises to the nucleus. The protein resides in the nucleoplasm. It localises to the mitochondrion matrix. It is found in the nucleolus. 3'-5' RNA exonuclease which cleaves in situ on specific transcripts in both nucleus and mitochondrion. Involved in regulating spatially segregated organellar RNA processing, acts as a coordinator of nucleo-mitochondrial crosstalk. In nucleolus, processes pre-ribosomal RNA involved in ribosome assembly and alters cytoplasmic translation. In mitochondrial matrix, processes 3'-termini of the mito-ribosomal and messenger RNAs and controls translation of mitochondrial proteins. This Rattus norvegicus (Rat) protein is MYG1 exonuclease.